Reading from the N-terminus, the 1155-residue chain is MAIYSSFWIRLYFTFRFFCYFLTSVVASDVSFLGDFSGFNVLSNSSANTDLSSQFFEQTNNGSLSSLIDTSYSNSQICYSSWQGDLYVIVLDSEQQTVLLQSNFTSNPTSLEIFSSQNTSFFGNISAIFCDDKFPYAYATFTFSDKPSFTSIYRWNVTNSNVTIEHFYNVKGNVDSLFFLNNDSVAISGNFTEISPFSSSNGPQIAKLAFRSNNSFSQNSLNRNLSSVSCDLTDSYSLWDPSSSGLVSIYAWAPYLIDFNRIRFYNYESSENSVAFFSAINPADGTVLPLTHYDLETGLSSTCDVNCSLQNFANYQDFYFSKGYNSYQIEIQMFGNGEATENSAFGLSSLQFFETNQNSYFDDSYNQESCGFPGLNSLSSYEGNFEASFSNASMPYWIQTIAGEQASVSFFPNITVPTNGTVQLLIPGCTYDNTCSQRGSVIANVYFAKNKQPATKLVQQASDFDQYVSLYSGYLQGFSDNFRPYVELLPYKNSRMVTHSIRFLEQSYTNVSNGLVFVNTTTDVNKLPSIIEFPAASKLRGTAISQIKSLSNGNFSLYMTGNFSDNYGNNVVYMDSLNHLHSFPNNGLNGWVSYIYVSGDSSYFGGNFTHTGDGSIKLNYIAMYSETSRNWSSLGLGTNGPVTHIGSTSLFIDGKIESFISFQGDFNEVYTSEGYAISTSGFSLWNPSSKSWVSMEKLGFYMSGYLFDIPGFNSTQRIYSGNLSAIASYSTRNIAHFSSDSLNDTFIPCYVNAFPSYIRLEDIAYPFANNSMIAILGSEEMEDKCTAAVYFANSTEPIYPKRILSANCSSKFIVLEDCLIIYSNDTDESDIVKNTFVSFNTTSNSLGNTTALSQLKGHINSVIVDDSYNNIFFGGNLSEQSSGCVGFCIFEYNSSSWRNISHNLISAEVQSILWVNETYSSMYLAGKFVWDTSDVDYLLMYNFDNNTIMSCKGSSSIPGPVLLASLKSQSKDEYSVLLYGTEVSSSDTYLNVLNSEGAINSYSLDIHLNQSTINSIDFFESNQISQIPINDSIIVLSGLIVLDDSSKASAVYCVNKSCLPLLTAFKDNGEAGIVRKVVQQKSFSSSASKMIPVTTKYDHIGQPRYVVIISLGISIGVMFLIMSGSIVVEIIHWFFSEHVETLHDYSNFLKELKTQ.

A signal peptide spans 1-27; it reads MAIYSSFWIRLYFTFRFFCYFLTSVVA. Over 28-1105 the chain is Extracellular; sequence SDVSFLGDFS…KYDHIGQPRY (1078 aa). Residues asparagine 44, asparagine 61, asparagine 103, asparagine 118, asparagine 124, asparagine 156, asparagine 161, asparagine 182, asparagine 190, asparagine 213, asparagine 224, asparagine 306, asparagine 391, asparagine 413, asparagine 419, asparagine 510, asparagine 519, asparagine 554, asparagine 562, asparagine 607, asparagine 630, asparagine 713, asparagine 722, asparagine 743, asparagine 769, asparagine 793, asparagine 807, asparagine 824, asparagine 840, asparagine 848, asparagine 876, asparagine 893, asparagine 899, asparagine 916, asparagine 945, asparagine 1009, asparagine 1030, and asparagine 1055 are each glycosylated (N-linked (GlcNAc...) asparagine). Residues 1106–1126 traverse the membrane as a helical segment; the sequence is VVIISLGISIGVMFLIMSGSI. The Cytoplasmic segment spans residues 1127–1155; the sequence is VVEIIHWFFSEHVETLHDYSNFLKELKTQ.

This sequence belongs to the RAX2 family. Interacts with for3 and tea1.

Its subcellular location is the cell membrane. Functionally, controls cell polarity, through the G1 phase of mitosis, via regulation of for3 localization. Required for actin cable formation where it directs the spatial distribution of the actin cables. The chain is Polarized growth protein rax2 from Schizosaccharomyces pombe (strain 972 / ATCC 24843) (Fission yeast).